The primary structure comprises 39 residues: Alpha-conotoxin ArIA (39 aa).

The propeptide occupies 1 to 17 (SDGRNVAAKAFHRIGRT). 2 disulfide bridges follow: Cys22–Cys28 and Cys23–Cys36. Residues 24–26 (SNP) are ser-Xaa-Pro motif, crucial for potent interaction with nAChR. Pro33 bears the 4-hydroxyproline; in ArIA mark.

Belongs to the conotoxin A superfamily. In terms of tissue distribution, expressed by the venom duct.

It localises to the secreted. In terms of biological role, alpha-conotoxins act on postsynaptic membranes, they bind to the nicotinic acetylcholine receptors (nAChR) and thus inhibit them. This toxin acts as a competitive inhibitor and is 3-fold more potent on alpha-7/CHRNA7 nAChRs (IC(50)=6 nM) than on alpha-3-beta-2/CHRNA3-CHRNB2 nAChR (IC(50)=18 nM). Functionally, acts as a competitive inhibitor and is 33-fold more potent on alpha-7/CHRNA7 nAChRs (IC(50)=1.8 nM) than on alpha-3-beta-2/CHRNA3-CHRNB2 nAChR (IC(50)=60.1 nM). In Conus arenatus (Sand-dusted cone), this protein is Alpha-conotoxin ArIA.